We begin with the raw amino-acid sequence, 1401 residues long: MKDLLNFLKAQHKTEEFDAIKIGLASPDMIRSWSFGEVKKPETINYRTFKPERDGLFCARIFGPVKDYECLCGKYKRLKHRGVICEKCGVEVTQTKVRRDRMGHIELASPVAHIWFLKSLPSRIGLLMDMPLRDIERVLYFEMYVVTEPGMTDLERGQMLTEEEYLDRLEEWGDEFTAKMGAEAIKDLLASMDLPAEAEQMREELDTTNSETKRKKLTKRLKLVEAFVASGNKPEWMILTVLPVLPPDLRPLVPLDGGRFATSDLNDLYRRVINRNNRLKRLLELAAPDIIVRNEKRMLQESVDALLDNGRRGRAITGSNKRPLKSLADMIKGKQGRFRQNLLGKRVDYSGRSVITVGPYLRLHQCGLPKKMALELFKPFIYSKLETRGLATTIKAAKKMVEREEAVVWDILDEVIREHPVLLNRAPTLHRLGIQAFEPVLIEGKAIQLHPLVCAAYNADFDGDQMAVHVPLTLEAQLEARTLMMSTNNILSPASGDPIIVPSQDVVLGLYYMTREKINAKGEGMYLTGPAEAEKAYRTKTAELHARVKVRITETIKHENGKLTTETKMIDTTVGRAMLWQIVPKGLPYSLVNQKLGKKQISNLLNEAYRKLGLKDTVIFADQIMYTGFAYAALSGVSVGIDDMVVPAAKYTEIAEAEEEVREIQEQFQSGLVTAGERYNKVIDIWASTNDRVAKAMMENLSSEQVINRQGEQEKQESFNSIYMMADSGARGSAAQIRQLAGMRGLMARPDGSIIETPITANFKEGLNVLQYFISTHGARKGLADTALKTANSGYLTRRLVDVAQDVVVTEHDCGTLEGVVMTPHIEGGDVKVALTELALGRVVSEDILKPGTDEVLIPRNTLLDEKWCKVINDNSVDQIKVRSVVTCDSDFGCCAQCYGRDLARGHLVNQGEAVGVIAAQSIGEPGTQLTMRTFHIGGAASTAAAENSIQAKNNGSVKLHNAKFVTNKDGKLVITSRASELTIIDEFGRTKEKHKLPYGSMLSKADGDAVAAGETVANWEAHTMPIITEVAGRVQFVDMIDGVTVSRQTDDLTGLSSSEVTEAAARPAAGKDMRPAIKLVDANGKDVLIPGTDMPAQYFLPGKAIVNLDDGAEVNVGDTLARIPQKSGGNKDITGGLPRVADLFEARKPKEPAILAEHSGTVSFGKETKGKRRLIITRDSGDTYEEMIPKHRQLNVFEGERIERGDVIADGPESPHDILRLRGIHAVTTYIANEVQEVYRLQGVKINDKHIETIVRQMLRKCTITFAGDSEFLPGETVEYSQVKIANRKLVEEGKEPARFERELLGITKASLATESFISAASFQETTRVLTEAAVSGKRDDLRGLKENVIVGRLIPAGTGFAYHQDRQAKRAQEQQGPSAEQATDNLAALLNAGFSSDDE.

Cysteine 70, cysteine 72, cysteine 85, and cysteine 88 together coordinate Zn(2+). Mg(2+) contacts are provided by aspartate 460, aspartate 462, and aspartate 464. Residues cysteine 814, cysteine 888, cysteine 895, and cysteine 898 each coordinate Zn(2+). Residues 1368–1387 form a disordered region; that stretch reads RQAKRAQEQQGPSAEQATDN. A compositionally biased stretch (polar residues) spans 1375-1386; that stretch reads EQQGPSAEQATD.

Belongs to the RNA polymerase beta' chain family. The RNAP catalytic core consists of 2 alpha, 1 beta, 1 beta' and 1 omega subunit. When a sigma factor is associated with the core the holoenzyme is formed, which can initiate transcription. Requires Mg(2+) as cofactor. Zn(2+) serves as cofactor.

It carries out the reaction RNA(n) + a ribonucleoside 5'-triphosphate = RNA(n+1) + diphosphate. Its function is as follows. DNA-dependent RNA polymerase catalyzes the transcription of DNA into RNA using the four ribonucleoside triphosphates as substrates. In Vibrio cholerae serotype O1 (strain ATCC 39541 / Classical Ogawa 395 / O395), this protein is DNA-directed RNA polymerase subunit beta'.